We begin with the raw amino-acid sequence, 156 residues long: Mitochondrial intermembrane space cysteine motif-containing protein MIX17 (156 aa).

The transit peptide at 1 to 21 (MARSRGSSRPISRSRPTQTRS) directs the protein to the mitochondrion. Residues 1–21 (MARSRGSSRPISRSRPTQTRS) show a composition bias toward low complexity. Disordered regions lie at residues 1–50 (MARS…GAQT) and 78–110 (AGIT…QTQT). The span at 84-110 (FSGSGSDSAPVEQQQQNMANTSGQTQT) shows a compositional bias: polar residues. The region spanning 115-156 (GRTCEIDARNFTRCLDENNGNFQICDYYLQQLKACQEAARQY) is the CHCH domain. Residues 118–128 (CEIDARNFTRC) carry the Cx9C motif motif. 2 cysteine pairs are disulfide-bonded: C118–C149 and C128–C139.

Its subcellular location is the mitochondrion intermembrane space. This is Mitochondrial intermembrane space cysteine motif-containing protein MIX17 (MIX17) from Saccharomyces cerevisiae (strain ATCC 204508 / S288c) (Baker's yeast).